We begin with the raw amino-acid sequence, 526 residues long: Nuclear pore glycoprotein p62 (526 aa).

N-acetylserine is present on S2. 4 tandem repeats follow at residues 6-7, 46-47, 78-79, and 115-116. The segment at 6 to 144 is 5 X 2 AA repeats of F-G; the sequence is FGGTGAPAGG…GTAPTGFVFG (139 aa). The segment at 43 to 82 is disordered; the sequence is GFNFGTPSQPAATTPSTSLFSLTTQTPTTQTPGFNFGTTP. Positions 46–81 are enriched in low complexity; the sequence is FGTPSQPAATTPSTSLFSLTTQTPTTQTPGFNFGTT. A compositionally biased stretch (polar residues) spans 128 to 137; it reads SGSTSNQGTA. The disordered stretch occupies residues 128-148; it reads SGSTSNQGTAPTGFVFGSSTT. The stretch at 143 to 144 is repeat 5; the sequence is FG. Positions 332–462 are required for centrosome localization; the sequence is MTYAQLESLI…QDLKDIIEHL (131 aa). Residues 332 to 462 adopt a coiled-coil conformation; that stretch reads MTYAQLESLI…QDLKDIIEHL (131 aa). O-linked (GlcNAc) threonine glycosylation is present at T377. S412 and S422 each carry phosphoserine. S472 carries an O-linked (GlcNAc) serine glycan.

The protein belongs to the nucleoporin NSP1/NUP62 family. As to quaternary structure, component of the p62 complex, a complex at least composed of NUP62, NUP54, and NUP58. Interacts with NUP88. Interacts with NUTF2. Interacts with HIKESHI. Interacts with OSBPL8. Interacts with CAPG. Interacts with SAS6 and TUBG1 at the centrosome. Interacts with MCM3AP. O-glycosylated. In terms of processing, the inner channel of the NPC has a different redox environment from the cytoplasm and allows the formation of interchain disulfide bonds between some nucleoporins, the significant increase of these linkages upon oxidative stress reduces the permeability of the NPC.

The protein localises to the nucleus. It is found in the nuclear pore complex. Its subcellular location is the cytoplasm. The protein resides in the cytoskeleton. It localises to the spindle pole. The protein localises to the nucleus envelope. It is found in the microtubule organizing center. Its subcellular location is the centrosome. In terms of biological role, essential component of the nuclear pore complex. The N-terminal is probably involved in nucleocytoplasmic transport. The C-terminal is involved in protein-protein interaction probably via coiled-coil formation, promotes its association with centrosomes and may function in anchorage of p62 to the pore complex. Plays a role in mitotic cell cycle progression by regulating centrosome segregation, centriole maturation and spindle orientation. It might be involved in protein recruitment to the centrosome after nuclear breakdown. This is Nuclear pore glycoprotein p62 (Nup62) from Mus musculus (Mouse).